Consider the following 475-residue polypeptide: Aspartyl/glutamyl-tRNA(Asn/Gln) amidotransferase subunit B (475 aa).

Belongs to the GatB/GatE family. GatB subfamily. Heterotrimer of A, B and C subunits.

It catalyses the reaction L-glutamyl-tRNA(Gln) + L-glutamine + ATP + H2O = L-glutaminyl-tRNA(Gln) + L-glutamate + ADP + phosphate + H(+). The catalysed reaction is L-aspartyl-tRNA(Asn) + L-glutamine + ATP + H2O = L-asparaginyl-tRNA(Asn) + L-glutamate + ADP + phosphate + 2 H(+). In terms of biological role, allows the formation of correctly charged Asn-tRNA(Asn) or Gln-tRNA(Gln) through the transamidation of misacylated Asp-tRNA(Asn) or Glu-tRNA(Gln) in organisms which lack either or both of asparaginyl-tRNA or glutaminyl-tRNA synthetases. The reaction takes place in the presence of glutamine and ATP through an activated phospho-Asp-tRNA(Asn) or phospho-Glu-tRNA(Gln). In Pelodictyon phaeoclathratiforme (strain DSM 5477 / BU-1), this protein is Aspartyl/glutamyl-tRNA(Asn/Gln) amidotransferase subunit B.